Here is a 276-residue protein sequence, read N- to C-terminus: Diaminopimelate epimerase (276 aa).

The substrate site is built by Asn13, Gln46, and Asn66. Cys75 (proton donor) is an active-site residue. Substrate-binding positions include 76 to 77 (GN), Asn159, Asn192, and 210 to 211 (ER). Residue Cys219 is the Proton acceptor of the active site. Substrate is bound at residue 220–221 (GT).

Belongs to the diaminopimelate epimerase family. Homodimer.

Its subcellular location is the cytoplasm. It catalyses the reaction (2S,6S)-2,6-diaminopimelate = meso-2,6-diaminopimelate. It functions in the pathway amino-acid biosynthesis; L-lysine biosynthesis via DAP pathway; DL-2,6-diaminopimelate from LL-2,6-diaminopimelate: step 1/1. Its function is as follows. Catalyzes the stereoinversion of LL-2,6-diaminopimelate (L,L-DAP) to meso-diaminopimelate (meso-DAP), a precursor of L-lysine and an essential component of the bacterial peptidoglycan. This is Diaminopimelate epimerase from Cellvibrio japonicus (strain Ueda107) (Pseudomonas fluorescens subsp. cellulosa).